Reading from the N-terminus, the 64-residue chain is Large ribosomal subunit protein uL29 (64 aa).

It belongs to the universal ribosomal protein uL29 family.

This Chloroherpeton thalassium (strain ATCC 35110 / GB-78) protein is Large ribosomal subunit protein uL29.